A 543-amino-acid chain; its full sequence is Probable ubiquitin-conjugating enzyme E2 26 (543 aa).

A disordered region spans residues 1-21 (MEPDVVEIPPPPLIASGSRTR). Positions 271-431 (NWVKKVQADW…VFLLSLKTMV (161 aa)) constitute a UBC core domain. Catalysis depends on cysteine 357, which acts as the Glycyl thioester intermediate. A disordered region spans residues 514 to 543 (LAEKPEPPMSNANTENQSKKKTRKRSRSSR). Positions 532-543 (KKKTRKRSRSSR) are enriched in basic residues.

This sequence belongs to the ubiquitin-conjugating enzyme family.

The catalysed reaction is S-ubiquitinyl-[E1 ubiquitin-activating enzyme]-L-cysteine + [E2 ubiquitin-conjugating enzyme]-L-cysteine = [E1 ubiquitin-activating enzyme]-L-cysteine + S-ubiquitinyl-[E2 ubiquitin-conjugating enzyme]-L-cysteine.. The protein operates within protein modification; protein ubiquitination. Functionally, accepts the ubiquitin from the E1 complex and catalyzes its covalent attachment to other proteins. This Arabidopsis thaliana (Mouse-ear cress) protein is Probable ubiquitin-conjugating enzyme E2 26 (UBC26).